Here is a 51-residue protein sequence, read N- to C-terminus: Conotoxin Cal6.33 (51 aa).

The N-terminal stretch at 1–22 is a signal peptide; sequence MKLTCVVIIAVLILTACQFTTA. 3 disulfide bridges follow: Cys-25-Cys-39, Cys-32-Cys-43, and Cys-38-Cys-50.

It belongs to the conotoxin O1 superfamily. As to expression, expressed by the venom duct.

It localises to the secreted. Its function is as follows. Probable neurotoxin. In Californiconus californicus (California cone), this protein is Conotoxin Cal6.33.